We begin with the raw amino-acid sequence, 584 residues long: 4-hydroxybenzoate decarboxylase subunit C (584 aa).

It belongs to the UbiD family. In terms of assembly, component of the decarboxylase complex composed of the subunits B and C (Potential). The subunit D usually found in other organisms seems to be absent.

The enzyme catalyses 4-hydroxybenzoate + H(+) = phenol + CO2. With respect to regulation, the enzyme activity is enhanced by Mg(2+), Fe(2+), Mn(2+) and Ca(2+). No stimulation is observed with Cu(2+) and Zn(2+). Catalyzes the reversible decarboxylation of 4-hydroxybenzoate. The sequence is that of 4-hydroxybenzoate decarboxylase subunit C from Chlamydia pneumoniae (Chlamydophila pneumoniae).